The primary structure comprises 183 residues: ADP-ribosylation factor-like protein 5 (183 aa).

Residues 27 to 34 (GLNAAGKT), 70 to 74 (DLGGQ), and 129 to 132 (NKQD) each bind GTP.

It belongs to the small GTPase superfamily. Arf family.

Functionally, may bind and exchange GTP and GDP. The sequence is that of ADP-ribosylation factor-like protein 5 (arl5) from Dictyostelium discoideum (Social amoeba).